The sequence spans 350 residues: Probable poly-beta-1,6-N-acetyl-D-glucosamine export protein (350 aa).

10 consecutive transmembrane segments (helical) span residues 7 to 29 (ELVY…TQIT), 44 to 66 (FYIR…LLTT), 79 to 101 (TRVK…SESL), 116 to 138 (LLGQ…SYII), 145 to 167 (LFNS…YYFT), 187 to 204 (IIFG…MGYN), 211 to 233 (FLER…FIAL), 243 to 262 (SFSY…ILGI), 269 to 291 (ILFN…HPII), and 306 to 328 (TMVF…GMIL).

It belongs to the acyltransferase 3 family.

It is found in the cell membrane. Presumably involved in the export of the biofilm adhesin polysaccharide poly-beta-1,6-N-acetyl-D-glucosamine (PNAG, also referred to as PIA) across the cell membrane. The chain is Probable poly-beta-1,6-N-acetyl-D-glucosamine export protein (icaC) from Staphylococcus aureus (strain Mu50 / ATCC 700699).